The following is a 466-amino-acid chain: Ribulose bisphosphate carboxylase large chain (466 aa).

K5 is modified (N6,N6,N6-trimethyllysine). Positions 114 and 164 each coordinate substrate. K166 acts as the Proton acceptor in catalysis. Position 168 (K168) interacts with substrate. Mg(2+) contacts are provided by K192, D194, and E195. Residue K192 is modified to N6-carboxylysine. Residue H285 is the Proton acceptor of the active site. Substrate contacts are provided by R286, H318, and S370.

Belongs to the RuBisCO large chain family. Type I subfamily. As to quaternary structure, heterohexadecamer of 8 large chains and 8 small chains; disulfide-linked. The disulfide link is formed within the large subunit homodimers. Mg(2+) is required as a cofactor. In terms of processing, the disulfide bond which can form in the large chain dimeric partners within the hexadecamer appears to be associated with oxidative stress and protein turnover.

It localises to the plastid. The protein localises to the chloroplast. It catalyses the reaction 2 (2R)-3-phosphoglycerate + 2 H(+) = D-ribulose 1,5-bisphosphate + CO2 + H2O. It carries out the reaction D-ribulose 1,5-bisphosphate + O2 = 2-phosphoglycolate + (2R)-3-phosphoglycerate + 2 H(+). Its function is as follows. RuBisCO catalyzes two reactions: the carboxylation of D-ribulose 1,5-bisphosphate, the primary event in carbon dioxide fixation, as well as the oxidative fragmentation of the pentose substrate in the photorespiration process. Both reactions occur simultaneously and in competition at the same active site. The polypeptide is Ribulose bisphosphate carboxylase large chain (Oxalis dillenii (Gray-green wood sorrel)).